A 269-amino-acid polypeptide reads, in one-letter code: Interleukin-1 beta (269 aa).

A propeptide spanning residues 1 to 116 (MAEVPELASE…TRNNDACVHD (116 aa)) is cleaved from the precursor.

This sequence belongs to the IL-1 family. As to quaternary structure, monomer. In its precursor form, weakly interacts with full-length MEFV; the mature cytokine does not interact at all. Interacts with integrins ITGAV:ITGBV and ITGA5:ITGB1; integrin-binding is required for IL1B signaling. Interacts with cargo receptor TMED10; the interaction is direct and is required for the secretion of IL1B mature form. Interacts with HSP90AB1; the interaction facilitates cargo translocation into the ERGIC. Interacts with HSP90B1; the interaction facilitates cargo translocation into the ERGIC.

The protein resides in the cytoplasm. The protein localises to the cytosol. It localises to the secreted. It is found in the lysosome. Its subcellular location is the extracellular exosome. Its function is as follows. Potent pro-inflammatory cytokine. Initially discovered as the major endogenous pyrogen, induces prostaglandin synthesis, neutrophil influx and activation, T-cell activation and cytokine production, B-cell activation and antibody production, and fibroblast proliferation and collagen production. Promotes Th17 differentiation of T-cells. Synergizes with IL12/interleukin-12 to induce IFNG synthesis from T-helper 1 (Th1) cells. Plays a role in angiogenesis by inducing VEGF production synergistically with TNF and IL6. Involved in transduction of inflammation downstream of pyroptosis: its mature form is specifically released in the extracellular milieu by passing through the gasdermin-D (GSDMD) pore. In Macaca nemestrina (Pig-tailed macaque), this protein is Interleukin-1 beta (IL1B).